Reading from the N-terminus, the 110-residue chain is Thioredoxin (110 aa).

In terms of domain architecture, Thioredoxin spans 3 to 108 (KPIEVHDSDF…YREIFDKVLA (106 aa)). C32 and C35 are oxidised to a cystine. N6,N6-dimethyllysine; alternate is present on K105. N6-methyllysine; alternate is present on K105.

In terms of biological role, participates in various redox reactions through the reversible oxidation of its active center dithiol to a disulfide and catalyzes dithiol-disulfide exchange reactions. The polypeptide is Thioredoxin (trxA) (Chloroflexus aurantiacus (strain ATCC 29366 / DSM 635 / J-10-fl)).